The primary structure comprises 569 residues: Myotubularin-related protein 9 (569 aa).

Positions 134-513 (GWSAFDLEQE…QCIKIWDRLF (380 aa)) constitute a Myotubularin phosphatase domain.

The protein belongs to the protein-tyrosine phosphatase family. Non-receptor class myotubularin subfamily. In terms of assembly, heterodimer with lipid phosphatase mtm-6.

The protein resides in the cytoplasm. Its subcellular location is the membrane. May act as a regulatory subunit for mtm-6. In association with phosphatase mtm-6, plays a role in endosome trafficking probably by regulating phosphatidylinositol-3-phosphate levels. Regulates fluid phase endocytosis in coelomocytes. Regulates posterior migration of QL neuroblast descendants and the anterior migration of QR neuroblast descendants and HSN neurons during larval development probably by controlling Wnt ligand secretion through the regulation of sorting receptor mig-14 trafficking. Involved in the formation of correct synapse number in DA9 motor neurons. This is Myotubularin-related protein 9 from Caenorhabditis elegans.